The sequence spans 505 residues: Activin receptor type-1B (505 aa).

Residues 1 to 23 form the signal peptide; the sequence is MAESAGASSFFPLVVLLLAGSGG. Residues 24–126 lie on the Extracellular side of the membrane; it reads SGPRGVQALL…EHPSMWGPVE (103 aa). N43 carries an N-linked (GlcNAc...) asparagine glycan. The helical transmembrane segment at 127-149 threads the bilayer; the sequence is LVGIIAGPVFLLFLIIIIVFLVI. Topologically, residues 150–505 are cytoplasmic; that stretch reads NYHQRVYHNR…QLSVQEDVKI (356 aa). The 30-residue stretch at 177–206 folds into the GS domain; sequence KTLQDLVYDLSTSGSGSGLPLFVQRTVART. The 291-residue stretch at 207 to 497 folds into the Protein kinase domain; that stretch reads IVLQEIIGKG…LRIKKTLSQL (291 aa). ATP is bound by residues 213-221 and K234; that span reads IGKGRFGEV. Residue D335 is the Proton acceptor of the active site. Y380 is modified (phosphotyrosine).

Belongs to the protein kinase superfamily. TKL Ser/Thr protein kinase family. TGFB receptor subfamily. As to quaternary structure, forms an activin receptor complex with activin receptor type-2 (ACVR2A or ACVR2B). Part of a complex consisting of MAGI2/ARIP1, ACVR2A, ACVR1B and SMAD3. Interacts with SMAD2 and SMAD3. Interacts with SMAD7. Interacts with FKBP1A. Interacts with IGSF1. Interacts with CRIPTO. Interacts with TDP2. Interacts with TSC22D1/TSC-22. Requires Mg(2+) as cofactor. Mn(2+) serves as cofactor. Autophosphorylated. Phosphorylated by activin receptor type-2 (ACVR2A or ACVR2B) in response to activin-binding at serine and threonine residues in the GS domain. Phosphorylation of ACVR1B by activin receptor type-2 regulates association with SMAD7. In terms of processing, ubiquitinated. Level of ubiquitination is regulated by the SMAD7-SMURF1 complex. Post-translationally, ubiquitinated. Expressed in many tissues, most strongly in kidney, pancreas, brain, lung, and liver.

The protein resides in the cell membrane. The enzyme catalyses L-threonyl-[receptor-protein] + ATP = O-phospho-L-threonyl-[receptor-protein] + ADP + H(+). It carries out the reaction L-seryl-[receptor-protein] + ATP = O-phospho-L-seryl-[receptor-protein] + ADP + H(+). Activin receptor type-2 (ACVR2A or ACVR2B) activates the type-1 receptor through phosphorylation of its regulatory GS domain. Its function is as follows. Transmembrane serine/threonine kinase activin type-1 receptor forming an activin receptor complex with activin receptor type-2 (ACVR2A or ACVR2B). Transduces the activin signal from the cell surface to the cytoplasm and is thus regulating a many physiological and pathological processes including neuronal differentiation and neuronal survival, hair follicle development and cycling, FSH production by the pituitary gland, wound healing, extracellular matrix production, immunosuppression and carcinogenesis. Activin is also thought to have a paracrine or autocrine role in follicular development in the ovary. Within the receptor complex, type-2 receptors (ACVR2A and/or ACVR2B) act as a primary activin receptors whereas the type-1 receptors like ACVR1B act as downstream transducers of activin signals. Activin binds to type-2 receptor at the plasma membrane and activates its serine-threonine kinase. The activated receptor type-2 then phosphorylates and activates the type-1 receptor such as ACVR1B. Once activated, the type-1 receptor binds and phosphorylates the SMAD proteins SMAD2 and SMAD3, on serine residues of the C-terminal tail. Soon after their association with the activin receptor and subsequent phosphorylation, SMAD2 and SMAD3 are released into the cytoplasm where they interact with the common partner SMAD4. This SMAD complex translocates into the nucleus where it mediates activin-induced transcription. Inhibitory SMAD7, which is recruited to ACVR1B through FKBP1A, can prevent the association of SMAD2 and SMAD3 with the activin receptor complex, thereby blocking the activin signal. Activin signal transduction is also antagonized by the binding to the receptor of inhibin-B via the IGSF1 inhibin coreceptor. ACVR1B also phosphorylates TDP2. This chain is Activin receptor type-1B (ACVR1B), found in Homo sapiens (Human).